The primary structure comprises 270 residues: NADPH-dependent 7-cyano-7-deazaguanine reductase (270 aa).

79-81 (IES) is a substrate binding site. Residue 81–82 (SK) coordinates NADPH. Residue C177 is the Thioimide intermediate of the active site. D184 acts as the Proton donor in catalysis. 216 to 217 (HE) is a binding site for substrate. Position 245-246 (245-246 (RG)) interacts with NADPH.

This sequence belongs to the GTP cyclohydrolase I family. QueF type 2 subfamily. Homodimer.

The protein resides in the cytoplasm. The enzyme catalyses 7-aminomethyl-7-carbaguanine + 2 NADP(+) = 7-cyano-7-deazaguanine + 2 NADPH + 3 H(+). Its pathway is tRNA modification; tRNA-queuosine biosynthesis. Catalyzes the NADPH-dependent reduction of 7-cyano-7-deazaguanine (preQ0) to 7-aminomethyl-7-deazaguanine (preQ1). The polypeptide is NADPH-dependent 7-cyano-7-deazaguanine reductase (Acinetobacter baumannii (strain ATCC 17978 / DSM 105126 / CIP 53.77 / LMG 1025 / NCDC KC755 / 5377)).